We begin with the raw amino-acid sequence, 630 residues long: Pentatricopeptide repeat-containing protein At2g03880, mitochondrial (630 aa).

The N-terminal 76 residues, 1–76 (MKSVMSKIKL…LIKCCISNRA (76 aa)), are a transit peptide targeting the mitochondrion. PPR repeat units lie at residues 60–94 (DSAT…GHRP), 95–125 (MMFL…MPQR), 126–160 (NVIS…NVRP), 161–192 (NVYT…GLES), 193–223 (DVFV…MVTG), 224–258 (DAIV…GFIA), 259–289 (EQAT…IVKY), 292–322 (DLIL…MKER), 323–357 (DVIT…GTKP), 358–388 (NYIT…MKKL), and 394–424 (VREH…MECE). The segment at 429-504 (TWRTLLGACR…EPGCSWIEVN (76 aa)) is type E motif. The type E(+) motif stretch occupies residues 505-535 (KQIHAFIIGDNSHPQIVEVSKKLNQLIHRLT). The tract at residues 536-630 (GIGYVPETNF…DGKCSCGDYW (95 aa)) is type DYW motif.

Belongs to the PPR family. PCMP-H subfamily.

Its subcellular location is the mitochondrion. This chain is Pentatricopeptide repeat-containing protein At2g03880, mitochondrial (PCMP-H44), found in Arabidopsis thaliana (Mouse-ear cress).